Reading from the N-terminus, the 421-residue chain is Plant UBX domain-containing protein 5 (421 aa).

Residues 4–45 (ETNENLINSFIEITSSSREEANFFLESHTWNLDAAVSTFLDN) form the UBA domain. 2 disordered regions span residues 46–171 (DAAA…MMVQ) and 292–338 (ENFT…PSRG). Over residues 69-84 (QSPSQSHSPDYTPSET) the composition is skewed to polar residues. Residues 85–102 (SPSPSRSRSASPSSRAAP) show a composition bias toward low complexity. In terms of domain architecture, SEP spans 231–295 (RIMHTITFWL…DLVRRGENFT (65 aa)). Positions 312-328 (GASGSGSSSAPQASSAP) are enriched in low complexity. Residues 343–420 (PAAPTTSIQL…GIANAVVIQK (78 aa)) enclose the UBX domain.

In terms of assembly, interacts with CDC48A (non-hexameric) via its UBX domain.

The sequence is that of Plant UBX domain-containing protein 5 from Arabidopsis thaliana (Mouse-ear cress).